The following is a 297-amino-acid chain: N-acetylmannosamine kinase (297 aa).

ATP contacts are provided by residues 5–12 (ALDIGGTK) and 132–139 (GVGGGIIL). Zn(2+)-binding residues include His-156, Cys-166, Cys-168, and Cys-173.

It belongs to the ROK (NagC/XylR) family. NanK subfamily. Homodimer.

It catalyses the reaction an N-acyl-D-mannosamine + ATP = an N-acyl-D-mannosamine 6-phosphate + ADP + H(+). Its pathway is amino-sugar metabolism; N-acetylneuraminate degradation; D-fructose 6-phosphate from N-acetylneuraminate: step 2/5. Functionally, catalyzes the phosphorylation of N-acetylmannosamine (ManNAc) to ManNAc-6-P. The chain is N-acetylmannosamine kinase from Pasteurella multocida (strain Pm70).